Here is a 464-residue protein sequence, read N- to C-terminus: Kynurenine 3-monooxygenase (464 aa).

It belongs to the aromatic-ring hydroxylase family. KMO subfamily. Requires FAD as cofactor.

It catalyses the reaction L-kynurenine + NADPH + O2 + H(+) = 3-hydroxy-L-kynurenine + NADP(+) + H2O. It participates in cofactor biosynthesis; NAD(+) biosynthesis; quinolinate from L-kynurenine: step 1/3. In terms of biological role, catalyzes the hydroxylation of L-kynurenine (L-Kyn) to form 3-hydroxy-L-kynurenine (L-3OHKyn). Required for synthesis of quinolinic acid. This chain is Kynurenine 3-monooxygenase, found in Myxococcus xanthus (strain DK1622).